The following is a 78-amino-acid chain: Conotoxin CaFr179 (78 aa).

The first 19 residues, 1-19 (MSGLGIMVLTLLLLVFMEA), serve as a signal peptide directing secretion. A propeptide spanning residues 20 to 44 (SHQDAGEKQATQRDAINVRRRRSLA) is cleaved from the precursor. Intrachain disulfides connect Cys-52-Cys-64, Cys-56-Cys-72, and Cys-63-Cys-76. At Phe-77 the chain carries Phenylalanine amide.

The protein belongs to the conotoxin O3 superfamily. As to expression, expressed by the venom duct.

It localises to the secreted. The protein is Conotoxin CaFr179 of Conus caracteristicus (Characteristic cone).